Consider the following 515-residue polypeptide: ATP synthase subunit alpha (515 aa).

171-178 is a binding site for ATP; the sequence is GDRQTGKT.

Belongs to the ATPase alpha/beta chains family. As to quaternary structure, F-type ATPases have 2 components, CF(1) - the catalytic core - and CF(0) - the membrane proton channel. CF(1) has five subunits: alpha(3), beta(3), gamma(1), delta(1), epsilon(1). CF(0) has three main subunits: a(1), b(2) and c(9-12). The alpha and beta chains form an alternating ring which encloses part of the gamma chain. CF(1) is attached to CF(0) by a central stalk formed by the gamma and epsilon chains, while a peripheral stalk is formed by the delta and b chains.

The protein resides in the cell inner membrane. The catalysed reaction is ATP + H2O + 4 H(+)(in) = ADP + phosphate + 5 H(+)(out). Produces ATP from ADP in the presence of a proton gradient across the membrane. The alpha chain is a regulatory subunit. The protein is ATP synthase subunit alpha of Coxiella burnetii (strain CbuK_Q154) (Coxiella burnetii (strain Q154)).